An 84-amino-acid polypeptide reads, in one-letter code: MKVSVLITLAVWGVMFLLTSAQERGSDQMDSPAWLKSMERIFQSEERECRWMFGGCTTDSDCCEHLGCRWEKPSWCAWDGTFRK.

A signal peptide spans 1–21 (MKVSVLITLAVWGVMFLLTSA). The propeptide occupies 22–48 (QERGSDQMDSPAWLKSMERIFQSEERE). 3 disulfide bridges follow: C49–C63, C56–C68, and C62–C76.

It belongs to the neurotoxin 10 (Hwtx-1) family. 06 (F4b) subfamily. As to expression, expressed by the venom gland.

The protein resides in the secreted. Its function is as follows. Probable ion channel inhibitor. In Chilobrachys guangxiensis (Chinese earth tiger tarantula), this protein is U2-theraphotoxin-Cg1b 1.